The chain runs to 102 residues: Defensin (102 aa).

An N-terminal signal peptide occupies residues 1–25; sequence MKCATIVCTIAVVLAATLLNGSVQA. The propeptide occupies 26–62; that stretch reads APQEEAALSGGANLNTLLDELPEETHHAALENYRAKR. 3 cysteine pairs are disulfide-bonded: C65-C92, C78-C98, and C82-C100.

Belongs to the invertebrate defensin family. Type 1 subfamily.

It is found in the secreted. Functionally, responsible for the anti Gram-positive activity of immune hemolymph. The sequence is that of Defensin (Def1) from Anopheles gambiae (African malaria mosquito).